The sequence spans 134 residues: ATP synthase epsilon chain (134 aa).

Belongs to the ATPase epsilon chain family. F-type ATPases have 2 components, CF(1) - the catalytic core - and CF(0) - the membrane proton channel. CF(1) has five subunits: alpha(3), beta(3), gamma(1), delta(1), epsilon(1). CF(0) has three main subunits: a, b and c.

Its subcellular location is the cell membrane. Produces ATP from ADP in the presence of a proton gradient across the membrane. This is ATP synthase epsilon chain from Ruminococcus albus (strain ATCC 27210 / DSM 20455 / JCM 14654 / NCDO 2250 / 7).